The sequence spans 384 residues: Galactokinase (384 aa).

35–38 lines the substrate pocket; it reads EHTD. Residues Ser-69 and 125 to 131 contribute to the ATP site; that span reads GAGLSSS. Ser-131 and Glu-163 together coordinate Mg(2+). Asp-175 acts as the Proton acceptor in catalysis. Tyr-224 contributes to the substrate binding site.

This sequence belongs to the GHMP kinase family. GalK subfamily.

It localises to the cytoplasm. It catalyses the reaction alpha-D-galactose + ATP = alpha-D-galactose 1-phosphate + ADP + H(+). It participates in carbohydrate metabolism; galactose metabolism. Its function is as follows. Catalyzes the transfer of the gamma-phosphate of ATP to D-galactose to form alpha-D-galactose-1-phosphate (Gal-1-P). In Aliivibrio fischeri (strain MJ11) (Vibrio fischeri), this protein is Galactokinase.